The following is a 159-amino-acid chain: Cytochrome c-type biogenesis protein CcmE (159 aa).

Topologically, residues Met-1 to Arg-8 are cytoplasmic. A helical; Signal-anchor for type II membrane protein membrane pass occupies residues Leu-9–Ala-29. At Leu-30–Ser-159 the chain is on the periplasmic side. Heme is bound by residues His-130 and Tyr-134. A compositionally biased stretch (basic and acidic residues) spans Tyr-134 to His-147. The disordered stretch occupies residues Tyr-134 to Ser-159.

It belongs to the CcmE/CycJ family.

Its subcellular location is the cell inner membrane. In terms of biological role, heme chaperone required for the biogenesis of c-type cytochromes. Transiently binds heme delivered by CcmC and transfers the heme to apo-cytochromes in a process facilitated by CcmF and CcmH. This chain is Cytochrome c-type biogenesis protein CcmE, found in Escherichia coli (strain SMS-3-5 / SECEC).